Reading from the N-terminus, the 320-residue chain is Large ribosomal subunit protein uL10y (320 aa).

A disordered region spans residues 289 to 320; that stretch reads AGGGAPAAAKVEEKEESDEEDYGGDFGLFDEE. Positions 302-320 are enriched in acidic residues; it reads KEESDEEDYGGDFGLFDEE. The residue at position 305 (S305) is a Phosphoserine. Y310 carries the phosphotyrosine modification.

The protein belongs to the universal ribosomal protein uL10 family. As to quaternary structure, P0 forms a pentameric complex by interaction with dimers of P1 and P2.

Functionally, ribosomal protein P0 is the functional equivalent of E.coli protein L10. The protein is Large ribosomal subunit protein uL10y (RPP0B) of Arabidopsis thaliana (Mouse-ear cress).